The chain runs to 279 residues: Phosphatidylglycerol--prolipoprotein diacylglyceryl transferase (279 aa).

Transmembrane regions (helical) follow at residues 18–38 (LSVR…YFVA), 55–75 (IIFY…VIFQ), and 89–109 (IWHG…AGVI). Arg137 contributes to the a 1,2-diacyl-sn-glycero-3-phospho-(1'-sn-glycerol) binding site. 2 helical membrane passes run 203-223 (LGET…FIEG) and 235-255 (IRVA…LIVY).

The protein belongs to the Lgt family.

It is found in the cell membrane. It catalyses the reaction L-cysteinyl-[prolipoprotein] + a 1,2-diacyl-sn-glycero-3-phospho-(1'-sn-glycerol) = an S-1,2-diacyl-sn-glyceryl-L-cysteinyl-[prolipoprotein] + sn-glycerol 1-phosphate + H(+). It participates in protein modification; lipoprotein biosynthesis (diacylglyceryl transfer). In terms of biological role, catalyzes the transfer of the diacylglyceryl group from phosphatidylglycerol to the sulfhydryl group of the N-terminal cysteine of a prolipoprotein, the first step in the formation of mature lipoproteins. The polypeptide is Phosphatidylglycerol--prolipoprotein diacylglyceryl transferase (Staphylococcus aureus (strain Mu3 / ATCC 700698)).